Here is a 202-residue protein sequence, read N- to C-terminus: Small ribosomal subunit protein uS4 (202 aa).

Residues 1–13 show a composition bias toward basic residues; sequence MSRYRGPRLRVTR. The interval 1-42 is disordered; sequence MSRYRGPRLRVTRRLGELPGLTRKASKKSNPPGQHGQARRKR. Residues 90–152 enclose the S4 RNA-binding domain; sequence NRLDNVCFRL…KASKKLVEGN (63 aa).

The protein belongs to the universal ribosomal protein uS4 family. As to quaternary structure, part of the 30S ribosomal subunit. Contacts protein S5. The interaction surface between S4 and S5 is involved in control of translational fidelity.

One of the primary rRNA binding proteins, it binds directly to 16S rRNA where it nucleates assembly of the body of the 30S subunit. Functionally, with S5 and S12 plays an important role in translational accuracy. In Prochlorococcus marinus subsp. pastoris (strain CCMP1986 / NIES-2087 / MED4), this protein is Small ribosomal subunit protein uS4.